Here is a 498-residue protein sequence, read N- to C-terminus: Pre-glycoprotein polyprotein GP complex (498 aa).

Glycine 2 carries N-myristoyl glycine; by host lipidation. Topologically, residues 2–17 (GQIVTMFEALPHIIDE) are extracellular. Residues 18-33 (VINIVIIVLIVITGIK) traverse the membrane as a helical segment. At 34-58 (AVYNFATCGIFALISFLLLAGRSCG) the chain is on the cytoplasmic side. Cysteine 57 lines the Zn(2+) pocket. Residues 59–438 (MYGLKGPDIY…QGSTPLALMD (380 aa)) are Extracellular-facing. N-linked (GlcNAc...) asparagine; by host glycans are attached at residues asparagine 85, asparagine 95, asparagine 114, asparagine 124, and asparagine 171. Intrachain disulfides connect cysteine 92–cysteine 239, cysteine 123–cysteine 160, cysteine 184–cysteine 220, cysteine 285–cysteine 298, cysteine 307–cysteine 316, and cysteine 370–cysteine 391. An N-linked (GlcNAc...) asparagine; by host glycan is attached at asparagine 232. 3 N-linked (GlcNAc...) asparagine; by host glycosylation sites follow: asparagine 371, asparagine 396, and asparagine 401. A helical membrane pass occupies residues 439-459 (LLMFSTSAYLVSIFLHLVKIP). Over 460–498 (THRHIKGGSCPKPHRLTNKGICSCGAFKVPGVKTVWKRR) the chain is Cytoplasmic. Residues histidine 461, histidine 463, cysteine 469, histidine 473, cysteine 481, and cysteine 483 each coordinate Zn(2+).

It belongs to the arenaviridae GPC protein family. In terms of assembly, interacts with glycoprotein G2. Part of the GP complex (GP-C) together with glycoprotein G1 and glycoprotein G2. The GP-complex interacts with protein Z, which interacts with ribonucleocapsid; these interactions may induce virion budding. Homotrimer; disulfide-linked. In pre-fusion state, G1 homotrimers bind G2 homotrimers via ionic interactions. Part of the GP complex (GP-C) together with glycoprotein G2 and the stable signal peptide. Interacts with the primary host receptor DAG1 on the cell surface. The GP-complex interacts with protein Z, which interacts with ribonucleocapsid; these interactions may induce virion budding. As to quaternary structure, homotrimer. Interacts with the stable signal peptide. In pre-fusion state, G2 homotrimers bind G1 homotrimers via ionic interactions. Part of the GP complex (GP-C) together with glycoprotein G1 and the stable signal peptide. Acidification in the endosome triggers rearrangements, which ultimately leads to a 6 helix bundle formed by the two heptad repeat domains (HR1 and HR2) in post-fusion state. The GP-complex interacts with protein Z, which interacts with ribonucleocapsid; these interactions may induce virion budding. Post-translationally, specific enzymatic cleavages in vivo yield mature proteins. GP-C polyprotein is cleaved in the endoplasmic reticulum by the host protease MBTPS1. Only cleaved glycoprotein is incorporated into virions. In terms of processing, the SSP remains stably associated with the GP complex following cleavage by signal peptidase and plays crucial roles in the trafficking of GP through the secretory pathway. Myristoylation is necessary for GP2-mediated fusion activity. Inhibition of host myristoylation by the compound DDD85646 leads to the abrogation of GP2-mediated fusion upon exposure to low pH and inhibition of viral multiplication.

The protein localises to the virion membrane. It is found in the host endoplasmic reticulum membrane. The protein resides in the host Golgi apparatus membrane. It localises to the host cell membrane. Its function is as follows. Functions as a cleaved signal peptide that is retained as the third component of the GP complex (GP-C). Helps to stabilize the spike complex in its native conformation. The SSP is required for efficient glycoprotein expression, post-translational maturation cleavage of G1 and G2, glycoprotein transport to the cell surface plasma membrane, formation of infectious virus particles, and acid pH-dependent glycoprotein-mediated cell fusion. Functionally, forms the virion spikes together with glycoprotein G2. The glycoprotein spike trimers are connected to the underlying matrix. Interacts with the host receptor. Mediates virus attachment to the host primary receptor alpha-dystroglycan DAG1 (alpha-DG) at the cell surface. Down-modulates host DAG1. Forms the virion spikes together with glycoprotein G1. The glycoprotein spike trimers are connected to the underlying matrix. Class I viral fusion protein that directs fusion of viral and host endosomal membranes, leading to delivery of the nucleocapsid into the cytoplasm. Membrane fusion is mediated by irreversible conformational changes induced by acidification. This Homo sapiens (Human) protein is Pre-glycoprotein polyprotein GP complex.